The primary structure comprises 324 residues: tRNA-modifying protein YgfZ (324 aa).

Tryptophan 184 is a binding site for folate.

Belongs to the tRNA-modifying YgfZ family.

The protein resides in the cytoplasm. Folate-binding protein involved in regulating the level of ATP-DnaA and in the modification of some tRNAs. It is probably a key factor in regulatory networks that act via tRNA modification, such as initiation of chromosomal replication. This is tRNA-modifying protein YgfZ from Vibrio vulnificus (strain YJ016).